Consider the following 81-residue polypeptide: Costars family protein ABRACL (81 aa).

It belongs to the costars family.

This is Costars family protein ABRACL from Salmo salar (Atlantic salmon).